The following is a 583-amino-acid chain: MKAIIVLLMVVTSNADRICTGITSSNSPHVVKTATQGEVNVTGVIPLTTTPTKSHFANLKGTKTRGKLCPNCLNCTDLDVALGRPKCMGTIPSAKASILHEVKPVTSGCFPIMHDRTKIRQLPNLLRGYENIRLSTRNVINAERAPGGPYIIGTSGSCPNVTNGNGFFATMAWAVPKDNKTATNPLTVEVPYICTKGEDQITVWGFHSDTETQMVKLYGDSKPQKFTSSANGVTTHYVSQIGGFPNQTEDGGLPQSGRIVVDYMVQKPGKTGTIVYQRGVLLPQKVWCASGRSKVIKGSLPLIGEADCLHEKYGGLNKSKPYYTGEHAKAIGNCPIWVKTPLKLANGTKYRPPAKLLKERGFFGAIAGFLEGGWEGMIAGWHGYTSHGAHGVAVAADLKSTQEAINKITKNLNSLSELEVKNLQRLSGAMDELHNEILELDEKVDDLRADTISSQIELAVLLSNEGIINSEDEHLLALERKLKKMLGPSAVDIGNGCFETKHKCNQTCLDRIAAGTFNAGEFSLPTFDSLNITAASLNDDGLDNHTILLYYSTAASSLAVTLMIAIFIVYMVSRDNVSCSICL.

Residues 1–15 form the signal peptide; that stretch reads MKAIIVLLMVVTSNA. The Extracellular portion of the chain corresponds to 16–551; sequence DRICTGITSS…LDNHTILLYY (536 aa). 4 disulfides stabilise this stretch: C19/C497, C75/C87, C109/C158, and C504/C508. Residues N40 and N74 are each glycosylated (N-linked (GlcNAc...) asparagine; by host). Residues N160, N179, N246, N317, N346, N505, N531, and N544 are each glycosylated (N-linked (GlcNAc...) asparagine; by host). The helical transmembrane segment at 552–572 threads the bilayer; the sequence is STAASSLAVTLMIAIFIVYMV. The Cytoplasmic portion of the chain corresponds to 573–583; the sequence is SRDNVSCSICL. S-palmitoyl cysteine; by host attachment occurs at residues C579 and C582.

The protein belongs to the influenza viruses hemagglutinin family. In terms of assembly, homotrimer of disulfide-linked HA1-HA2. Palmitoylated. In terms of processing, in natural infection, inactive HA is matured into HA1 and HA2 outside the cell by one or more trypsin-like, arginine-specific endoprotease secreted by the bronchial epithelial cells. One identified protease that may be involved in this process is secreted in lungs by club cells.

It is found in the virion membrane. It localises to the host apical cell membrane. Its function is as follows. Binds to sialic acid-containing receptors on the cell surface, bringing about the attachment of the virus particle to the cell. Plays a major role in the determination of host range restriction and virulence. Class I viral fusion protein. Responsible for penetration of the virus into the cell cytoplasm by mediating the fusion of the membrane of the endocytosed virus particle with the endosomal membrane. Low pH in endosomes induce an irreversible conformational change in HA2, releasing the fusion hydrophobic peptide. Several trimers are required to form a competent fusion pore. This chain is Hemagglutinin, found in Influenza B virus (strain B/Singapore/222/1979).